The chain runs to 404 residues: Glucose-1-phosphate adenylyltransferase (404 aa).

Alpha-D-glucose 1-phosphate is bound by residues Y99, G164, 179–180, and S197; that span reads EK.

It belongs to the bacterial/plant glucose-1-phosphate adenylyltransferase family.

The catalysed reaction is alpha-D-glucose 1-phosphate + ATP + H(+) = ADP-alpha-D-glucose + diphosphate. It participates in capsule biogenesis; capsule polysaccharide biosynthesis. Its pathway is glycan biosynthesis; glycogen biosynthesis. In terms of biological role, involved in the biosynthesis of ADP-glucose, a building block, required in the biosynthesis of maltose-1-phosphate (M1P) and in the elongation reactions to produce linear alpha-1,4-glucans. Catalyzes the reaction between ATP and alpha-D-glucose 1-phosphate (G1P) to produce pyrophosphate and ADP-Glc. The sequence is that of Glucose-1-phosphate adenylyltransferase from Mycolicibacterium paratuberculosis (strain ATCC BAA-968 / K-10) (Mycobacterium paratuberculosis).